Here is a 143-residue protein sequence, read N- to C-terminus: Cofilin (143 aa).

Positions 5–137 (GVAVADESLT…AYESVLEKVS (133 aa)) constitute an ADF-H domain.

Belongs to the actin-binding proteins ADF family.

It localises to the cytoplasm. The protein localises to the cytoskeleton. Its subcellular location is the nucleus matrix. Controls reversibly actin polymerization and depolymerization in a pH-sensitive manner. It has the ability to bind G- and F-actin in a 1:1 ratio of cofilin to actin. Binding to F-actin is regulated by tropomyosin. It is the major component of intranuclear and cytoplasmic actin rods. Required for accumulation of actin at the cell division site via depolymerizing actin at the cell ends. In association with myosin II has a role in the assembly of the contractile ring via severing actin filaments. Involved in the maintenance of the contractile ring once formed. In association with profilin and capping protein, has a role in the mitotic reorganization of the actin cytoskeleton. The sequence is that of Cofilin (COF1) from Eremothecium gossypii (strain ATCC 10895 / CBS 109.51 / FGSC 9923 / NRRL Y-1056) (Yeast).